Here is a 400-residue protein sequence, read N- to C-terminus: MGGWSSKPRQGMGTNLSVPNPLGFFPDHQLDPAFGANSNNPDWDFNPNKDHWPEANQVGVGTFGPGFTPPHGGLLGWSPQAQGILTTVPAAPPPASTNRQSGRQPTPISPPLRDSHPQAMQWNSTTFHQALLDPRVRGLYFPAGGSSSGTVNPVPTTASPISSIFSRTGDPAPNMENTTSGFLGPLLVLQAGFFLLTRILTIPQSLDSWWTSLNFLGGAPTCPGQNSQSPTSNHSPTSCPPICPGYRWMCLRRFIIFLFILLLCLIFLLVLLDYQGMLPVCPLLPGTSTTSTGPCKTCTTPAQGTSMFPSCCCTKPSDGNCTCIPIPSSWAFARFLWEWASVRFSWLSLLVPFVQWFAGLSPTVWLSVIWMMWYWGPSLYNILSPFLPLLPIFFCLWVYI.

M1 bears the N-acetylmethionine mark. Disordered regions lie at residues 1–54 (MGGW…HWPE) and 85–116 (LTTV…RDSH). G2 carries N-myristoyl glycine; by host lipidation. Residues 2–119 (GGWSSKPRQG…PPLRDSHPQA (118 aa)) are pre-S1. Residues 2-174 (GGWSSKPRQG…FSRTGDPAPN (173 aa)) form a pre-S region. The Virion surface; in external conformation portion of the chain corresponds to 2–181 (GGWSSKPRQG…APNMENTTSG (180 aa)). Topologically, residues 2–253 (GGWSSKPRQG…PGYRWMCLRR (252 aa)) are intravirion; in internal conformation. N-linked (GlcNAc...) asparagine glycosylation occurs at W4. Residues 96–106 (STNRQSGRQPT) show a composition bias toward polar residues. The interval 120–174 (MQWNSTTFHQALLDPRVRGLYFPAGGSSSGTVNPVPTTASPISSIFSRTGDPAPN) is pre-S2. Residues 182-202 (FLGPLLVLQAGFFLLTRILTI) traverse the membrane as a helical segment. Topologically, residues 203-253 (PQSLDSWWTSLNFLGGAPTCPGQNSQSPTSNHSPTSCPPICPGYRWMCLRR) are intravirion; in external conformation. A helical membrane pass occupies residues 254–274 (FIIFLFILLLCLIFLLVLLDY). The Virion surface portion of the chain corresponds to 275–348 (QGMLPVCPLL…WASVRFSWLS (74 aa)). N320 carries N-linked (GlcNAc...) asparagine; by host glycosylation. A helical transmembrane segment spans residues 349 to 369 (LLVPFVQWFAGLSPTVWLSVI). At 370-375 (WMMWYW) the chain is on the intravirion side. Residues 376-398 (GPSLYNILSPFLPLLPIFFCLWV) form a helical membrane-spanning segment. Residues 399–400 (YI) are Virion surface-facing.

It belongs to the orthohepadnavirus major surface antigen family. As to quaternary structure, in its internal form (Li-HBsAg), interacts with the capsid protein and with the isoform S. Interacts with host chaperone CANX. Associates with host chaperone CANX through its pre-S2 N glycan; this association may be essential for isoform M proper secretion. In terms of assembly, interacts with isoform L. Interacts with the antigens of satellite virus HDV (HDVAgs); this interaction is required for encapsidation of HDV genomic RNA. Post-translationally, isoform M is N-terminally acetylated by host at a ratio of 90%, and N-glycosylated by host at the pre-S2 region. Myristoylated.

Its subcellular location is the virion membrane. The large envelope protein exists in two topological conformations, one which is termed 'external' or Le-HBsAg and the other 'internal' or Li-HBsAg. In its external conformation the protein attaches the virus to cell receptors and thereby initiating infection. This interaction determines the species specificity and liver tropism. This attachment induces virion internalization predominantly through caveolin-mediated endocytosis. The large envelope protein also assures fusion between virion membrane and endosomal membrane. In its internal conformation the protein plays a role in virion morphogenesis and mediates the contact with the nucleocapsid like a matrix protein. Functionally, the middle envelope protein plays an important role in the budding of the virion. It is involved in the induction of budding in a nucleocapsid independent way. In this process the majority of envelope proteins bud to form subviral lipoprotein particles of 22 nm of diameter that do not contain a nucleocapsid. The chain is Large envelope protein from Homo sapiens (Human).